The following is a 130-amino-acid chain: Small ribosomal subunit protein uS11 (130 aa).

Belongs to the universal ribosomal protein uS11 family. In terms of assembly, part of the 30S ribosomal subunit. Interacts with proteins S7 and S18. Binds to IF-3.

Located on the platform of the 30S subunit, it bridges several disparate RNA helices of the 16S rRNA. Forms part of the Shine-Dalgarno cleft in the 70S ribosome. This is Small ribosomal subunit protein uS11 from Synechococcus sp. (strain CC9902).